Consider the following 148-residue polypeptide: MASKRINKELRDLQRDPPVSCSAGPTGDDMFQWQATIMGPADSPFAGGVFLVTIHFPPDYPFKPPKVAFRTKVYHPNINSNGSICLDILKEQWSPALTVSKVLLSICSLLTDPNPDDPLVPEIAHIYKTDRVKYESTAQSWTQKYAMG.

In terms of domain architecture, UBC core spans 1–147 (MASKRINKEL…AQSWTQKYAM (147 aa)). Residue Cys-85 is the Glycyl thioester intermediate of the active site.

The protein belongs to the ubiquitin-conjugating enzyme family. Interacts with RGLG3 and RGLG4. In terms of tissue distribution, ubiquitously expressed at very low levels.

It carries out the reaction S-ubiquitinyl-[E1 ubiquitin-activating enzyme]-L-cysteine + [E2 ubiquitin-conjugating enzyme]-L-cysteine = [E1 ubiquitin-activating enzyme]-L-cysteine + S-ubiquitinyl-[E2 ubiquitin-conjugating enzyme]-L-cysteine.. Its pathway is protein modification; protein ubiquitination. In terms of biological role, accepts the ubiquitin from the E1 complex and catalyzes its covalent attachment to other proteins. The sequence is that of Ubiquitin-conjugating enzyme E2 30 (UBC30) from Arabidopsis thaliana (Mouse-ear cress).